A 346-amino-acid chain; its full sequence is Large ribosomal subunit protein uL10 (346 aa).

The disordered stretch occupies residues 305–346; it reads EVPAAPAPEAKEEKKEEAEEEEEEKKEVSEEDLSAGLGALFG. Residues 322–337 show a composition bias toward acidic residues; sequence AEEEEEEKKEVSEEDL.

Belongs to the universal ribosomal protein uL10 family. Part of the 50S ribosomal subunit. Forms part of the ribosomal stalk which helps the ribosome interact with GTP-bound translation factors. Forms a heptameric L10(L12)2(L12)2(L12)2 complex, where L10 forms an elongated spine to which the L12 dimers bind in a sequential fashion.

Forms part of the ribosomal stalk, playing a central role in the interaction of the ribosome with GTP-bound translation factors. This Ignicoccus hospitalis (strain KIN4/I / DSM 18386 / JCM 14125) protein is Large ribosomal subunit protein uL10.